Reading from the N-terminus, the 444-residue chain is Phosphoglucosamine mutase (444 aa).

The Phosphoserine intermediate role is filled by serine 102. Mg(2+) contacts are provided by serine 102, aspartate 241, aspartate 243, and aspartate 245. Phosphoserine is present on serine 102.

This sequence belongs to the phosphohexose mutase family. Mg(2+) serves as cofactor. Post-translationally, activated by phosphorylation.

It catalyses the reaction alpha-D-glucosamine 1-phosphate = D-glucosamine 6-phosphate. In terms of biological role, catalyzes the conversion of glucosamine-6-phosphate to glucosamine-1-phosphate. The chain is Phosphoglucosamine mutase from Actinobacillus succinogenes (strain ATCC 55618 / DSM 22257 / CCUG 43843 / 130Z).